The chain runs to 96 residues: Protein YdfX (96 aa).

This chain is Protein YdfX (ydfX), found in Escherichia coli (strain K12).